A 537-amino-acid chain; its full sequence is uncharacterized protein (537 aa).

Residues 1–15 (MALFQLFSFLNVTLG) form the signal peptide. The next 2 membrane-spanning stretches (helical) occupy residues 459–479 (VLFSAISACLSFIIDVGGCCF) and 490–510 (VILLLLLLPNYTHLTFILGFT).

It is found in the host membrane. This is an uncharacterized protein from Citrus sinensis (Sweet orange).